Here is a 210-residue protein sequence, read N- to C-terminus: 3-hexulose-6-phosphate synthase (210 aa).

Belongs to the HPS/KGPDC family. HPS subfamily.

The enzyme catalyses D-ribulose 5-phosphate + formaldehyde = D-arabino-hex-3-ulose 6-phosphate. The protein operates within one-carbon metabolism; formaldehyde assimilation via RuMP pathway; D-fructose 6-phosphate from D-ribulose 5-phosphate and formaldehyde: step 1/2. Its function is as follows. Catalyzes the condensation of ribulose 5-phosphate with formaldehyde to form 3-hexulose 6-phosphate. The chain is 3-hexulose-6-phosphate synthase from Staphylococcus aureus (strain bovine RF122 / ET3-1).